Here is a 108-residue protein sequence, read N- to C-terminus: UPF0145 protein HDEF_1024 (108 aa).

This sequence belongs to the UPF0145 family.

The protein is UPF0145 protein HDEF_1024 of Hamiltonella defensa subsp. Acyrthosiphon pisum (strain 5AT).